The primary structure comprises 175 residues: Methylmalonyl-CoA epimerase, mitochondrial (175 aa).

A mitochondrion-targeting transit peptide spans 1–35 (MARVLKVAAASAAGLFPRLRTPVSTVRTSASLSSH). The VOC domain occupies 46 to 175 (RLNHVAVAVP…GGVLVELEQA (130 aa)). His-49 serves as a coordination point for Co(2+). Lys-113 is modified (N6-succinyllysine). Residue His-121 participates in Co(2+) binding. At Lys-149 the chain carries N6-acetyllysine; alternate. Lys-149 carries the post-translational modification N6-succinyllysine; alternate. Co(2+) is bound at residue Glu-171.

Belongs to the methylmalonyl-CoA epimerase family.

The protein resides in the mitochondrion. It carries out the reaction (R)-methylmalonyl-CoA = (S)-methylmalonyl-CoA. Its function is as follows. Methylmalonyl-CoA epimerase involved in propionyl-CoA metabolism. The polypeptide is Methylmalonyl-CoA epimerase, mitochondrial (MCEE) (Bos taurus (Bovine)).